Here is a 290-residue protein sequence, read N- to C-terminus: ATP synthase gamma chain (290 aa).

The protein belongs to the ATPase gamma chain family. F-type ATPases have 2 components, CF(1) - the catalytic core - and CF(0) - the membrane proton channel. CF(1) has five subunits: alpha(3), beta(3), gamma(1), delta(1), epsilon(1). CF(0) has three main subunits: a, b and c.

The protein localises to the cell inner membrane. Its function is as follows. Produces ATP from ADP in the presence of a proton gradient across the membrane. The gamma chain is believed to be important in regulating ATPase activity and the flow of protons through the CF(0) complex. In Dinoroseobacter shibae (strain DSM 16493 / NCIMB 14021 / DFL 12), this protein is ATP synthase gamma chain.